Reading from the N-terminus, the 360-residue chain is F-box protein SKP2A (360 aa).

An F-box domain is found at 25–71 (IKEWKDIPVELLMRILSLVDDRNVIVASGVCTGWRDAISFGLTRLRL). (indol-3-yl)acetate contacts are provided by residues 127-128 (SL), 149-152 (NLSG), 175-178 (NLCG), and N202.

Part of a SCF (ASK-cullin-F-box) protein ligase complex. Interacts with CUL1 (RUB1-modified and non-modified isoforms), SKP1A, SKP1B and ASK18. Recruit DPB and phosphorylated E2FC. Interacts with auxin. Auxin controls the interaction with DPB. In terms of processing, polyubiquitinated and subsequently targeted to proteasome. Auxin promotes this ubiquitination-mediated degradation. As to expression, expressed in embryo, seedlings, hypocotyl, roots, leaves and flowers.

It localises to the nucleus. It functions in the pathway protein modification; protein ubiquitination. Component of SCF(SKP2A) E3 ubiquitin ligase complexes, which mediate the ubiquitination and subsequent proteasomal degradation of target proteins (including cell cycle repressors). Acts as an auxin receptor; one active auxin is indole-3-acetate. Regulates the stability of the transcription factors E2FC and DPB, repressors of cell proliferation. Confers increase tolerance to osmotic stress by promoting cell division, especially in meristems. Promotes the formation of lateral root primordia. This is F-box protein SKP2A (SKP2A) from Arabidopsis thaliana (Mouse-ear cress).